The primary structure comprises 233 residues: uncharacterized protein (233 aa).

Helical transmembrane passes span 78-98 (FCLI…PVMY), 113-133 (FITC…LFKL), and 188-208 (FLLI…YGTI).

It is found in the membrane. This is an uncharacterized protein from Saccharomyces cerevisiae (strain ATCC 204508 / S288c) (Baker's yeast).